A 309-amino-acid polypeptide reads, in one-letter code: Glutaminase (309 aa).

Residues Ser-64, Asn-114, Glu-160, Asn-167, Tyr-191, Tyr-243, and Val-261 each contribute to the substrate site.

The protein belongs to the glutaminase family. As to quaternary structure, homotetramer.

The catalysed reaction is L-glutamine + H2O = L-glutamate + NH4(+). The protein is Glutaminase of Methylorubrum extorquens (strain PA1) (Methylobacterium extorquens).